A 144-amino-acid polypeptide reads, in one-letter code: Large ribosomal subunit protein uL16 (144 aa).

Belongs to the universal ribosomal protein uL16 family. Part of the 50S ribosomal subunit.

Its function is as follows. Binds 23S rRNA and is also seen to make contacts with the A and possibly P site tRNAs. The protein is Large ribosomal subunit protein uL16 of Latilactobacillus sakei subsp. sakei (strain 23K) (Lactobacillus sakei subsp. sakei).